Reading from the N-terminus, the 448-residue chain is Pre-mRNA-splicing factor SAD1 (448 aa).

N-acetylmethionine is present on methionine 1. Residues proline 27–threonine 124 form a UBP-type; degenerate zinc finger. Residues cysteine 60, cysteine 63, histidine 79, and histidine 85 each contribute to the Zn(2+) site. The USP domain occupies isoleucine 150–glutamine 447.

Component of the 45S U1.U2.U4/U6.U5 penta-snRNP particle, a subcomplex of the spliceosome.

Its subcellular location is the nucleus. Functionally, promotes the assembly of newly synthesized U4 snRNA into the U4/U6 snRNP particle. Required for splicing of pre-mRNA. The sequence is that of Pre-mRNA-splicing factor SAD1 (SAD1) from Saccharomyces cerevisiae (strain ATCC 204508 / S288c) (Baker's yeast).